Reading from the N-terminus, the 458-residue chain is Probable M18 family aminopeptidase 1 (458 aa).

Positions 95, 170, and 434 each coordinate Zn(2+).

This sequence belongs to the peptidase M18 family. The cofactor is Zn(2+).

The polypeptide is Probable M18 family aminopeptidase 1 (apeA) (Borreliella burgdorferi (strain ATCC 35210 / DSM 4680 / CIP 102532 / B31) (Borrelia burgdorferi)).